Consider the following 617-residue polypeptide: Probable translation initiation factor IF-2 (617 aa).

Residues 14–231 (LRQPIVVVLG…VLAGLTQTYL (218 aa)) enclose the tr-type G domain. Residues 23–30 (GHVDHGKT) are G1. 23–30 (GHVDHGKT) is a binding site for GTP. Residues 48–52 (GITQH) form a G2 region. The tract at residues 87 to 90 (DTPG) is G3. Residues 87 to 91 (DTPGH) and 141 to 144 (NKID) contribute to the GTP site. Positions 141-144 (NKID) are G4. The tract at residues 209–211 (SAR) is G5.

This sequence belongs to the TRAFAC class translation factor GTPase superfamily. Classic translation factor GTPase family. IF-2 subfamily.

Function in general translation initiation by promoting the binding of the formylmethionine-tRNA to ribosomes. Seems to function along with eIF-2. This Aeropyrum pernix (strain ATCC 700893 / DSM 11879 / JCM 9820 / NBRC 100138 / K1) protein is Probable translation initiation factor IF-2 (infB).